The following is a 46-amino-acid chain: Iota-conotoxin RXIA (46 aa).

A 4-hydroxyproline; partial mark is found at P2 and P11. 4 cysteine pairs are disulfide-bonded: C5–C19, C12–C22, C18–C27, and C21–C38. P29 is modified (4-hydroxyproline). F44 carries the post-translational modification D-phenylalanine.

It belongs to the conotoxin I1 superfamily. The natural D-Phe-44 form of the peptide is more potent than the L-Phe-44 form. As to expression, expressed by the venom duct.

The protein localises to the secreted. Functionally, iota-conotoxins bind to voltage-gated sodium channels and act as agonists by shifting the voltage-dependence of activation to more hyperpolarized levels. This toxin acts on Nav1.6/SCN8A &gt; Nav1.2/SCN2A &gt; Nav1.7/SCN9A sodium channels. Produces general excitatory symptoms upon intracorporeal injection and repetitive action potentials in the frog cutaneous pectoris muscle. Natural peptide (with D-Phe) is active on nerve, but not on muscle. Synthetic peptide (with L-Phe) is not active on both nerve and muscle. In Conus radiatus (Rayed cone), this protein is Iota-conotoxin RXIA.